Here is a 521-residue protein sequence, read N- to C-terminus: Maturase K (521 aa).

Belongs to the intron maturase 2 family. MatK subfamily.

It is found in the plastid. The protein localises to the chloroplast. Usually encoded in the trnK tRNA gene intron. Probably assists in splicing its own and other chloroplast group II introns. The protein is Maturase K of Anthericum liliago (St-Bernard's lily).